The following is a 458-amino-acid chain: Putative U-box domain-containing protein 46 (458 aa).

A U-box domain is found at 71 to 144 (EVPKEFICTL…TQWCLVNKYD (74 aa)). ARM repeat units lie at residues 241 to 281 (ESNK…SLSA) and 283 to 322 (DSNK…NLCI).

The catalysed reaction is S-ubiquitinyl-[E2 ubiquitin-conjugating enzyme]-L-cysteine + [acceptor protein]-L-lysine = [E2 ubiquitin-conjugating enzyme]-L-cysteine + N(6)-ubiquitinyl-[acceptor protein]-L-lysine.. It participates in protein modification; protein ubiquitination. Functionally, functions as an E3 ubiquitin ligase. The sequence is that of Putative U-box domain-containing protein 46 (PUB46) from Arabidopsis thaliana (Mouse-ear cress).